Consider the following 155-residue polypeptide: Small ribosomal subunit protein uS7c (155 aa).

This sequence belongs to the universal ribosomal protein uS7 family. As to quaternary structure, part of the 30S ribosomal subunit.

The protein localises to the plastid. The protein resides in the chloroplast. In terms of biological role, one of the primary rRNA binding proteins, it binds directly to 16S rRNA where it nucleates assembly of the head domain of the 30S subunit. The chain is Small ribosomal subunit protein uS7c (rps7) from Allium textile (Textile onion).